A 609-amino-acid chain; its full sequence is mRNA-decapping enzyme 1B (609 aa).

A2 carries the post-translational modification N-acetylalanine. A Phosphoserine modification is found at S147. Y191 is subject to Phosphotyrosine. Disordered stretches follow at residues 201–222 and 243–264; these read PVKPSENQQQRIPQPNQTLDPE and TVEPPQTLHQQQQQQQEKLPIR. Residues 205–219 are compositionally biased toward polar residues; sequence SENQQQRIPQPNQTL. S272 and S333 each carry phosphoserine. Disordered regions lie at residues 326-345 and 359-438; these read TGPVRPGSPHNIGTSRGVQN and TPGA…SSGV. Polar residues predominate over residues 336 to 345; the sequence is NIGTSRGVQN. Over residues 368–378 the composition is skewed to low complexity; the sequence is PSTPAPASSAA. Residue T389 is modified to Phosphothreonine. Residues 418–438 are compositionally biased toward polar residues; it reads QSTLPRQTLPISGNQTGSSGV. Residues S440 and S503 each carry the phosphoserine modification.

It belongs to the DCP1 family. Interacts with DCP1A.

The protein localises to the cytoplasm. It localises to the nucleus. The catalysed reaction is a 5'-end (N(7)-methyl 5'-triphosphoguanosine)-ribonucleoside in mRNA + H2O = N(7)-methyl-GDP + a 5'-end phospho-ribonucleoside in mRNA + 2 H(+). May play a role in the degradation of mRNAs, both in normal mRNA turnover and in nonsense-mediated mRNA decay. May remove the 7-methyl guanine cap structure from mRNA molecules, yielding a 5'-phosphorylated mRNA fragment and 7m-GDP. In Pongo abelii (Sumatran orangutan), this protein is mRNA-decapping enzyme 1B (DCP1B).